The sequence spans 241 residues: Chalcone--flavanone isomerase C (241 aa).

Positions 50, 115, and 192 each coordinate substrate.

Belongs to the chalcone isomerase family.

It carries out the reaction a chalcone = a flavanone.. It participates in secondary metabolite biosynthesis; flavonoid biosynthesis. In terms of biological role, catalyzes the intramolecular cyclization of bicyclic chalcones into tricyclic (S)-flavanones. Responsible for the isomerization of 4,2',4',6'-tetrahydroxychalcone (also termed chalcone) into naringenin. This chain is Chalcone--flavanone isomerase C (CHI3), found in Petunia hybrida (Petunia).